The primary structure comprises 448 residues: Tubulin beta-1 chain (448 aa).

8 residues coordinate GTP: Gln-11, Glu-72, Ser-141, Gly-145, Thr-146, Gly-147, Asn-207, and Asn-229. Glu-72 serves as a coordination point for Mg(2+). Residues Gln-424–Glu-448 form a disordered region. A compositionally biased stretch (acidic residues) spans Gly-430 to Glu-448.

The protein belongs to the tubulin family. As to quaternary structure, dimer of alpha and beta chains. A typical microtubule is a hollow water-filled tube with an outer diameter of 25 nm and an inner diameter of 15 nM. Alpha-beta heterodimers associate head-to-tail to form protofilaments running lengthwise along the microtubule wall with the beta-tubulin subunit facing the microtubule plus end conferring a structural polarity. Microtubules usually have 13 protofilaments but different protofilament numbers can be found in some organisms and specialized cells. Mg(2+) is required as a cofactor.

The protein localises to the cytoplasm. The protein resides in the cytoskeleton. Tubulin is the major constituent of microtubules, a cylinder consisting of laterally associated linear protofilaments composed of alpha- and beta-tubulin heterodimers. Microtubules grow by the addition of GTP-tubulin dimers to the microtubule end, where a stabilizing cap forms. Below the cap, tubulin dimers are in GDP-bound state, owing to GTPase activity of alpha-tubulin. This is Tubulin beta-1 chain (TUB1) from Colletotrichum gloeosporioides (Anthracnose fungus).